The primary structure comprises 136 residues: Large ribosomal subunit protein uL16 (136 aa).

This sequence belongs to the universal ribosomal protein uL16 family. As to quaternary structure, part of the 50S ribosomal subunit.

In terms of biological role, binds 23S rRNA and is also seen to make contacts with the A and possibly P site tRNAs. In Yersinia enterocolitica serotype O:8 / biotype 1B (strain NCTC 13174 / 8081), this protein is Large ribosomal subunit protein uL16.